The primary structure comprises 517 residues: Probable cytosol aminopeptidase (517 aa).

Lysine 279 and aspartate 284 together coordinate Mn(2+). The active site involves lysine 291. Mn(2+) contacts are provided by aspartate 302, aspartate 361, and glutamate 363. Arginine 365 is an active-site residue.

Belongs to the peptidase M17 family. Mn(2+) is required as a cofactor.

It localises to the cytoplasm. The catalysed reaction is Release of an N-terminal amino acid, Xaa-|-Yaa-, in which Xaa is preferably Leu, but may be other amino acids including Pro although not Arg or Lys, and Yaa may be Pro. Amino acid amides and methyl esters are also readily hydrolyzed, but rates on arylamides are exceedingly low.. The enzyme catalyses Release of an N-terminal amino acid, preferentially leucine, but not glutamic or aspartic acids.. In terms of biological role, presumably involved in the processing and regular turnover of intracellular proteins. Catalyzes the removal of unsubstituted N-terminal amino acids from various peptides. In Streptomyces coelicolor (strain ATCC BAA-471 / A3(2) / M145), this protein is Probable cytosol aminopeptidase.